Consider the following 372-residue polypeptide: N-methyl-L-tryptophan oxidase (372 aa).

4–34 is a binding site for FAD; the sequence is DLIIIGSGSVGAAAGYYATRAGLKVLMTDAH. Cysteine 307 is subject to S-8alpha-FAD cysteine.

The protein belongs to the MSOX/MTOX family. MTOX subfamily. Monomer. FAD is required as a cofactor.

It catalyses the reaction N(alpha)-methyl-L-tryptophan + O2 + H2O = L-tryptophan + formaldehyde + H2O2. Catalyzes the oxidative demethylation of N-methyl-L-tryptophan. This chain is N-methyl-L-tryptophan oxidase, found in Salmonella heidelberg (strain SL476).